The sequence spans 123 residues: Small ribosomal subunit protein uS12 (123 aa).

A 3-methylthioaspartic acid modification is found at Asp-89.

This sequence belongs to the universal ribosomal protein uS12 family. In terms of assembly, part of the 30S ribosomal subunit. Contacts proteins S8 and S17. May interact with IF1 in the 30S initiation complex.

In terms of biological role, with S4 and S5 plays an important role in translational accuracy. Its function is as follows. Interacts with and stabilizes bases of the 16S rRNA that are involved in tRNA selection in the A site and with the mRNA backbone. Located at the interface of the 30S and 50S subunits, it traverses the body of the 30S subunit contacting proteins on the other side and probably holding the rRNA structure together. The combined cluster of proteins S8, S12 and S17 appears to hold together the shoulder and platform of the 30S subunit. This is Small ribosomal subunit protein uS12 from Methylobacterium radiotolerans (strain ATCC 27329 / DSM 1819 / JCM 2831 / NBRC 15690 / NCIMB 10815 / 0-1).